The following is a 297-amino-acid chain: Acetaldehyde dehydrogenase (297 aa).

15–18 (SGSI) is an NAD(+) binding site. Residue Cys130 is the Acyl-thioester intermediate of the active site. NAD(+)-binding positions include 162-170 (SAGIATREN) and Asn272.

The protein belongs to the acetaldehyde dehydrogenase family.

It catalyses the reaction acetaldehyde + NAD(+) + CoA = acetyl-CoA + NADH + H(+). The protein is Acetaldehyde dehydrogenase of Burkholderia pseudomallei (strain 1106a).